Here is a 202-residue protein sequence, read N- to C-terminus: uncharacterized protein (202 aa).

The interval 164 to 202 is disordered; it reads DTDSEQESDQESDQDSDQESEESDQESDQDSDQDSEGSE. Over residues 165 to 202 the composition is skewed to acidic residues; it reads TDSEQESDQESDQDSDQESEESDQESDQDSDQDSEGSE.

This is an uncharacterized protein from Acanthamoeba polyphaga mimivirus (APMV).